A 185-amino-acid polypeptide reads, in one-letter code: Thiol:disulfide interchange protein DsbE (185 aa).

Topologically, residues 1-4 (MKRN) are cytoplasmic. A helical transmembrane segment spans residues 5–25 (VLLLPLLIFLLIAAALLWQLA). Residues 26-185 (RNAQGDDPTN…WDRYSREAAQ (160 aa)) are Periplasmic-facing. Positions 39 to 177 (ALTGKPVPAF…WESELKPLWD (139 aa)) constitute a Thioredoxin domain. C80 and C83 form a disulfide bridge.

Belongs to the thioredoxin family. DsbE subfamily.

It is found in the cell inner membrane. Its function is as follows. Involved in disulfide bond formation. Catalyzes a late, reductive step in the assembly of periplasmic c-type cytochromes, probably the reduction of disulfide bonds of the apocytochrome c to allow covalent linkage with the heme. Possible subunit of a heme lyase. The sequence is that of Thiol:disulfide interchange protein DsbE (dsbE1) from Salmonella typhimurium (strain LT2 / SGSC1412 / ATCC 700720).